Reading from the N-terminus, the 548-residue chain is Probable malate:quinone oxidoreductase (548 aa).

Belongs to the MQO family. Requires FAD as cofactor.

The catalysed reaction is (S)-malate + a quinone = a quinol + oxaloacetate. Its pathway is carbohydrate metabolism; tricarboxylic acid cycle; oxaloacetate from (S)-malate (quinone route): step 1/1. This is Probable malate:quinone oxidoreductase from Escherichia coli O6:K15:H31 (strain 536 / UPEC).